Consider the following 365-residue polypeptide: Protein Tob1 (365 aa).

The Bipartite nuclear localization signal motif lies at 22–39 (RRRVNIFGEELERLLKQK). The important for nuclear localization stretch occupies residues 82-92 (VRGNLPQDLSV). Over residues 144–160 (DPASSVSSSPSPPFGHS) the composition is skewed to low complexity. Positions 144 to 171 (DPASSVSSSPSPPFGHSAAVSPTFMPRS) are disordered. A required for interaction with CPEB3 region spans residues 161–220 (AAVSPTFMPRSTQPLTFTTATFAATKFGSTKMKNSGRSSKVARTSPISLGLNVNVNDLLK). Threonine 204 is subject to Phosphothreonine. The Nuclear export signal signature appears at 228-236 (MHSLYGLGL). Positions 233–287 (GLGLGSQQQPQPQPQQPPSQPPPPPPPPQQQQQHQQQQQQQQQQQQQPQQQTSAL) are disordered. Residues 243 to 261 (QPQPQQPPSQPPPPPPPPQ) show a composition bias toward pro residues. The span at 262 to 283 (QQQQHQQQQQQQQQQQQQPQQQ) shows a compositional bias: low complexity.

The protein belongs to the BTG family. In terms of assembly, interacts with ERBB2. Interacts with CNOT7. Interacts with CPEB3 (via C-terminal RNA-binding region); recruits CNOT7 to CPEB3 to form a ternary complex required for mRNA deadenylation and decay. Interacts with CNOT8. Interacts with CPEB4. Post-translationally, phosphorylated on Ser and Thr residues.

Its subcellular location is the cytoplasm. It localises to the nucleus. Functionally, anti-proliferative protein; the function is mediated by association with deadenylase subunits of the CCR4-NOT complex. Mediates CPEB3-accelerated mRNA deadenylation by binding to CPEB3 and recruiting CNOT7 which leads to target mRNA deadenylation and decay. This chain is Protein Tob1 (Tob1), found in Rattus norvegicus (Rat).